Reading from the N-terminus, the 572-residue chain is Hemolysin-1 (572 aa).

Functionally, bacterial hemolysins are exotoxins that attack blood cell membranes and cause cell rupture by mechanisms not clearly defined. This is Hemolysin-1 (ash1) from Aeromonas salmonicida.